The chain runs to 695 residues: Threonine--tRNA ligase (695 aa).

Residues 1–76 form the TGS domain; that stretch reads MPRIPSPPQA…TTTDVVEPVT (76 aa). Positions 279 to 585 are catalytic; the sequence is DHRKLGVELD…LLEHHAGAFP (307 aa). Cysteine 384, histidine 435, and histidine 562 together coordinate Zn(2+).

Belongs to the class-II aminoacyl-tRNA synthetase family. In terms of assembly, homodimer. The cofactor is Zn(2+).

The protein resides in the cytoplasm. It carries out the reaction tRNA(Thr) + L-threonine + ATP = L-threonyl-tRNA(Thr) + AMP + diphosphate + H(+). Functionally, catalyzes the attachment of threonine to tRNA(Thr) in a two-step reaction: L-threonine is first activated by ATP to form Thr-AMP and then transferred to the acceptor end of tRNA(Thr). Also edits incorrectly charged L-seryl-tRNA(Thr). This chain is Threonine--tRNA ligase, found in Leifsonia xyli subsp. xyli (strain CTCB07).